The chain runs to 473 residues: H(+)/Cl(-) exchange transporter ClcA (473 aa).

The Cytoplasmic portion of the chain corresponds to 1-32; that stretch reads MKTDTSTFLAQQIVRLRRRDQIRRLMQRDKTP. A helical transmembrane segment spans residues 33 to 69; sequence LAILFMAAVVGTLTGLVGVAFEKTVSWVQNMRIGALV. Topologically, residues 70-76 are periplasmic; that stretch reads QVADHAF. Residues 77–100 traverse the membrane as a helical segment; the sequence is LLWPLAFILSALLAMVGYFLVRKF. The Selectivity filter part_1 signature appears at 106–110; it reads GSGIP. A chloride-binding site is contributed by Ser-107. The segment at residues 109 to 116 is an intramembrane region (helical); it reads IPEIEGAL. Residues 117-123 are Cytoplasmic-facing; it reads EELRPVR. Transmembrane regions (helical) follow at residues 124–141 and 148–166; these read WWRV…TLGA and EGPT…LDVF. Positions 146-150 match the Selectivity filter part_2 motif; that stretch reads GREGP. Topologically, residues 167 to 176 are cytoplasmic; sequence RMRSAEARHT. Intramembrane regions (helical) lie at residues 177–189 and 193–201; these read LLAT…LSAA and PLAGILFII. Topologically, residues 202–214 are cytoplasmic; the sequence is EEMRPQFRYNLIS. The chain crosses the membrane as a helical span at residues 215–232; it reads IKAVFTGVIMSSIVFRIF. The Periplasmic segment spans residues 233 to 252; the sequence is NGEAPIIEVGKLSDAPVNTL. A helical transmembrane segment spans residues 253–281; that stretch reads WLYLILGIIFGCVGPVFNSLVLRTQDMFQ. The Cytoplasmic portion of the chain corresponds to 282 to 287; that stretch reads RFHGGE. Residues 288 to 309 traverse the membrane as a helical segment; sequence IKKWVLMGGAIGGLCGILGLIE. Over 310–329 the chain is Periplasmic; sequence PAAAGGGFNLIPIAAAGNFS. The next 2 membrane-spanning stretches (helical) occupy residues 330–349 and 355–376; these read VGLL…LCFS and GIFA…MAAA. The Selectivity filter part_3 signature appears at 355–359; sequence GIFAP. The chloride site is built by Ile-356 and Phe-357. Topologically, residues 377–386 are periplasmic; the sequence is VLFPQYHPEA. Residues 387–401 constitute an intramembrane region (helical); sequence GTFAIAGMGALMAAS. The segment at residues 402–404 is an intramembrane region (note=Loop between two helices); the sequence is VRA. An intramembrane region (helical) is located at residues 405–416; that stretch reads PLTGIVLVLEMT. The segment at residues 417-421 is an intramembrane region (note=Loop between two helices); the sequence is DNYQL. The helical transmembrane segment at 422–438 threads the bilayer; it reads ILPMIITCLGATLLAQF. Topologically, residues 439 to 473 are cytoplasmic; it reads LGGKPLYSTILARTLAKQDAEQAAKNQNAPAGENT. Tyr-445 is a chloride binding site.

This sequence belongs to the chloride channel (TC 2.A.49) family. ClcA subfamily. As to quaternary structure, homodimer.

It is found in the cell inner membrane. It catalyses the reaction 2 chloride(in) + H(+)(out) = 2 chloride(out) + H(+)(in). Proton-coupled chloride transporter. Functions as antiport system and exchanges two chloride ions for 1 proton. Probably acts as an electrical shunt for an outwardly-directed proton pump that is linked to amino acid decarboxylation, as part of the extreme acid resistance (XAR) response. The protein is H(+)/Cl(-) exchange transporter ClcA of Salmonella paratyphi A (strain AKU_12601).